Reading from the N-terminus, the 347-residue chain is D-alanine--D-alanine ligase (347 aa).

Residues 131 to 333 (KRVLESAGIA…YPELIERLVD (203 aa)) form the ATP-grasp domain. Residue 161 to 216 (EEKLAYPVFTKPSNMGSSVGISKSENQEELRQALKLAFRYDSRVLVEQGVNAREIE) participates in ATP binding. 3 residues coordinate Mg(2+): Asp287, Glu300, and Asn302.

It belongs to the D-alanine--D-alanine ligase family. Requires Mg(2+) as cofactor. Mn(2+) serves as cofactor.

The protein localises to the cytoplasm. It catalyses the reaction 2 D-alanine + ATP = D-alanyl-D-alanine + ADP + phosphate + H(+). Its pathway is cell wall biogenesis; peptidoglycan biosynthesis. In terms of biological role, cell wall formation. This chain is D-alanine--D-alanine ligase, found in Streptococcus pneumoniae serotype 19F (strain G54).